The following is a 256-amino-acid chain: uncharacterized protein (256 aa).

The signal sequence occupies residues 1–22; it reads MKSIKRIGLCISLLILSIFVTS. The N-palmitoyl cysteine moiety is linked to residue Cys-23. A lipid anchor (S-diacylglycerol cysteine) is attached at Cys-23.

The protein belongs to the staphylococcal tandem lipoprotein family.

It is found in the cell membrane. This is an uncharacterized protein from Staphylococcus aureus (strain USA300).